Reading from the N-terminus, the 1397-residue chain is DNA-directed RNA polymerase subunit beta' (1397 aa).

Positions 75, 77, 90, and 93 each coordinate Zn(2+). The Mg(2+) site is built by aspartate 465, aspartate 467, and aspartate 469. Positions 819, 893, 900, and 903 each coordinate Zn(2+).

It belongs to the RNA polymerase beta' chain family. As to quaternary structure, the RNAP catalytic core consists of 2 alpha, 1 beta, 1 beta' and 1 omega subunit. When a sigma factor is associated with the core the holoenzyme is formed, which can initiate transcription. The cofactor is Mg(2+). Zn(2+) is required as a cofactor.

It catalyses the reaction RNA(n) + a ribonucleoside 5'-triphosphate = RNA(n+1) + diphosphate. Its function is as follows. DNA-dependent RNA polymerase catalyzes the transcription of DNA into RNA using the four ribonucleoside triphosphates as substrates. The protein is DNA-directed RNA polymerase subunit beta' of Acinetobacter baylyi (strain ATCC 33305 / BD413 / ADP1).